The following is a 330-amino-acid chain: PDZ and LIM domain protein 4 (330 aa).

Residues 1-84 (MTHSVTLRGP…HLTLSVSRPE (84 aa)) form the PDZ domain. Disordered regions lie at residues 104 to 153 (DPES…SNEA) and 219 to 242 (EAGE…ASKL). 7 positions are modified to phosphoserine: Ser107, Ser111, Ser115, Ser118, Ser119, Ser124, and Ser134. Polar residues predominate over residues 108 to 122 (QDCSPATSRRSSVSG). In terms of domain architecture, LIM zinc-binding spans 255–305 (CTRCGHGIVGTIVKARDKLYHPECFMCSDCGLNLKQRGYFFLDERLYCENH).

In terms of assembly, homodimer. Interacts (via C-terminus only or via combined C-terminus and LIM domain, but not LIM domain only) with PTPN13 (via the second or fourth PDZ domains). Found in a complex with PTPN13 and TRIP6. Interacts (via PDZ domain) with ACTN1 and ACTN2 (via C-terminal SDL residues). Interacts (via PDZ domain) with TRIP6 (via the second LIM domain or via the third LIM domain plus C-terminus). Interacts (via LIM domain) with GRIA1 (via C-terminus); this interaction as well as the interaction with alpha-actinin is required for their colocalization in early endosomes. Interacts with PDLIM1. Forms (via LIM domain) a heterodimer with PDLIM3. Interacts directly with SRC (via kinase domain and to a lesser extent the SH2 domain). In terms of processing, phosphorylated on tyrosine residue(s). Can be dephosphorylated by PTPN13. In terms of tissue distribution, expressed in several non-muscle tissues including lung, brain, ovary and uterus, and especially in epithelial cells at 14 dpc. In the uterus, high expression in the glandular epithelium, but absent in the simple columnar epithelium lining the uterus cavity.

The protein resides in the cytoplasm. Its subcellular location is the cytoskeleton. It is found in the cell projection. The protein localises to the dendritic spine. It localises to the early endosome membrane. The protein resides in the recycling endosome membrane. Its subcellular location is the nucleus. It is found in the perinuclear region. The protein localises to the lamellipodium. It localises to the synapse. The protein resides in the synaptosome. In terms of biological role, suppresses SRC activation by recognizing and binding to active SRC and facilitating PTPN13-mediated dephosphorylation of SRC 'Tyr-419' leading to its inactivation. Inactivated SRC dissociates from this protein allowing the initiation of a new SRC inactivation cycle. Involved in reorganization of the actin cytoskeleton. In nonmuscle cells, binds to ACTN1 (alpha-actinin-1), increases the affinity of ACTN1 to F-actin (filamentous actin), and promotes formation of actin stress fibers. Involved in regulation of the synaptic AMPA receptor transport in dendritic spines of hippocampal pyramidal neurons directing the receptors toward an insertion at the postsynaptic membrane. Links endosomal surface-internalized GRIA1-containing AMPA receptors to the alpha-actinin/actin cytoskeleton. Increases AMPA receptor-mediated excitatory postsynaptic currents in neurons. The protein is PDZ and LIM domain protein 4 (Pdlim4) of Mus musculus (Mouse).